Reading from the N-terminus, the 92-residue chain is Small ribosomal subunit protein uS19 (92 aa).

It belongs to the universal ribosomal protein uS19 family.

In terms of biological role, protein S19 forms a complex with S13 that binds strongly to the 16S ribosomal RNA. The chain is Small ribosomal subunit protein uS19 from Photobacterium profundum (strain SS9).